Consider the following 1181-residue polypeptide: Poly [ADP-ribose] polymerase tankyrase (1181 aa).

ANK repeat units lie at residues 56 to 85 (RKST…SIQA), 89 to 118 (GGLH…SPNT), 122 to 151 (WNYT…NHTI), 209 to 238 (RRST…DVHA), 242 to 271 (GGLV…NVNA), 275 to 304 (WAFT…DPTL), 362 to 394 (TGDT…LLNE), 398 to 427 (AFLT…KVNA), 431 to 458 (LGQT…DTNI), 483 to 513 (DSET…SVNC), 519 to 548 (RHST…EVYA), 552 to 581 (GGLV…NVNV), 585 to 614 (WKFT…DPMK), 638 to 668 (RGPS…NCRD), 672 to 701 (RNST…DVNA), 705 to 734 (GGLI…VVNA), 738 to 767 (WGFT…DAYM), and 771 to 799 (EGQT…LSQQ). Disordered stretches follow at residues 807–834 (SLTS…SAIL) and 864–886 (RISP…DLLP). The SAM domain occupies 889 to 952 (DTITNVSGFL…LKGIAQLRST (64 aa)). In terms of domain architecture, PARP catalytic spans 969–1174 (LPDDKEFVAV…YQIVKPDDSS (206 aa)). Cys1091, His1094, Cys1099, and Cys1102 together coordinate Zn(2+).

It belongs to the ARTD/PARP family. As to quaternary structure, interacts (via ANK repeats) with PI31.

The catalysed reaction is NAD(+) + (ADP-D-ribosyl)n-acceptor = nicotinamide + (ADP-D-ribosyl)n+1-acceptor + H(+).. It carries out the reaction L-aspartyl-[protein] + NAD(+) = 4-O-(ADP-D-ribosyl)-L-aspartyl-[protein] + nicotinamide. It catalyses the reaction L-glutamyl-[protein] + NAD(+) = 5-O-(ADP-D-ribosyl)-L-glutamyl-[protein] + nicotinamide. In terms of biological role, stimulates proteasome activity, probably by ADP-ribosylation of PI31. Modulates 26S proteasome assembly. The chain is Poly [ADP-ribose] polymerase tankyrase from Drosophila melanogaster (Fruit fly).